A 320-amino-acid chain; its full sequence is Ubiquinone biosynthesis protein COQ4, mitochondrial (320 aa).

Residues 1–31 constitute a mitochondrion transit peptide; the sequence is MFARSALGRSDQLVTALNSQKRQFVLTAATT. Positions 205, 206, 209, and 221 each coordinate Zn(2+).

The protein belongs to the COQ4 family. As to quaternary structure, component of a multi-subunit COQ enzyme complex, composed of at least COQ3, COQ4, COQ5, COQ6, COQ7 and COQ9. Zn(2+) serves as cofactor.

The protein resides in the mitochondrion inner membrane. The enzyme catalyses a 4-hydroxy-3-methoxy-5-(all-trans-polyprenyl)benzoate + H(+) = a 2-methoxy-6-(all-trans-polyprenyl)phenol + CO2. Its pathway is cofactor biosynthesis; ubiquinone biosynthesis. Functionally, lyase that catalyzes the C1-decarboxylation of 4-hydroxy-3-methoxy-5-(all-trans-polyprenyl)benzoic acid into 2-methoxy-6-(all-trans-polyprenyl)phenol during ubiquinone biosynthesis. This is Ubiquinone biosynthesis protein COQ4, mitochondrial from Scheffersomyces stipitis (strain ATCC 58785 / CBS 6054 / NBRC 10063 / NRRL Y-11545) (Yeast).